The primary structure comprises 172 residues: Small ribosomal subunit protein uS5 (172 aa).

Positions 17-80 constitute an S5 DRBM domain; it reads LKEKMIQVNR…DAARRDMVKV (64 aa).

It belongs to the universal ribosomal protein uS5 family. As to quaternary structure, part of the 30S ribosomal subunit. Contacts proteins S4 and S8.

In terms of biological role, with S4 and S12 plays an important role in translational accuracy. Located at the back of the 30S subunit body where it stabilizes the conformation of the head with respect to the body. The sequence is that of Small ribosomal subunit protein uS5 from Methylibium petroleiphilum (strain ATCC BAA-1232 / LMG 22953 / PM1).